Reading from the N-terminus, the 283-residue chain is MKIKKKYCGHVIIVGKANVGKSTLLNNIIGKKISIVSRKKNTTQSNITGIKTEDNYQSIYIDTPGVVFDKNNNQMKHHKNNFYQTTQIATLIIFIIDRIDWTIHDEIILNEIKKTKIPILIIINKIDKISNKIILLPFINFLKKKIDFIEILPISAKKISNLILLKNIIKSYLPENCHIYPECYVTTNSDFFTVSEIIREQLILFLGDELPSIIKVEIESFKKKEKIALYIKAIIWVKNVRQKSIVIGHNGEKIKKISMISRNNIEKKFYIKTHLVLWVKDKN.

An Era-type G domain is found at 7-175 (YCGHVIIVGK…KNIIKSYLPE (169 aa)). Residues 15–22 (GKANVGKS) form a G1 region. 15–22 (GKANVGKS) serves as a coordination point for GTP. The interval 41–45 (NTTQS) is G2. The segment at 62-65 (DTPG) is G3. GTP is bound by residues 62 to 66 (DTPGV) and 124 to 127 (NKID). A G4 region spans residues 124–127 (NKID). The tract at residues 154–156 (ISA) is G5. In terms of domain architecture, KH type-2 spans 198 to 283 (IREQLILFLG…HLVLWVKDKN (86 aa)).

The protein belongs to the TRAFAC class TrmE-Era-EngA-EngB-Septin-like GTPase superfamily. Era GTPase family. As to quaternary structure, monomer.

It is found in the cytoplasm. It localises to the cell membrane. In terms of biological role, an essential GTPase that binds both GDP and GTP, with rapid nucleotide exchange. Plays a role in 16S rRNA processing and 30S ribosomal subunit biogenesis and possibly also in cell cycle regulation and energy metabolism. The polypeptide is GTPase Era (Buchnera aphidicola subsp. Acyrthosiphon pisum (strain Tuc7)).